Consider the following 396-residue polypeptide: Acetate kinase (396 aa).

Residue N7 coordinates Mg(2+). K14 provides a ligand contact to ATP. Residue R88 coordinates substrate. Catalysis depends on D145, which acts as the Proton donor/acceptor. ATP contacts are provided by residues 205–209 (HLGNG), 279–281 (DFR), and 327–331 (GIGEN). E381 contacts Mg(2+).

It belongs to the acetokinase family. In terms of assembly, homodimer. The cofactor is Mg(2+). Mn(2+) is required as a cofactor.

The protein localises to the cytoplasm. It catalyses the reaction acetate + ATP = acetyl phosphate + ADP. Its pathway is metabolic intermediate biosynthesis; acetyl-CoA biosynthesis; acetyl-CoA from acetate: step 1/2. In terms of biological role, catalyzes the formation of acetyl phosphate from acetate and ATP. Can also catalyze the reverse reaction. The sequence is that of Acetate kinase from Campylobacter jejuni subsp. jejuni serotype O:2 (strain ATCC 700819 / NCTC 11168).